Reading from the N-terminus, the 24-residue chain is Arginine attenuator peptide (24 aa).

Belongs to the arginine attenuator peptide family.

Its function is as follows. Arginine attenuator peptide (AAP) that has a regulatory role in the production of arginine-specific carbamoyl phosphate synthetase. Encoded by an upstream open reading frame (uORF) within the 5'-leader region of arginine-specific carbamoyl phosphate synthetase small chain (arg-2) mRNA, it attenuates the translation of the downstream arg-2 ORF. In the presence of high concentrations of arginine, ribosomes translating the uORF encoding AAP stall at the termination codon, resulting in reduced translation from the downstream arg-2 initiation codon. The chain is Arginine attenuator peptide from Neurospora crassa (strain ATCC 24698 / 74-OR23-1A / CBS 708.71 / DSM 1257 / FGSC 987).